A 177-amino-acid polypeptide reads, in one-letter code: Dual-action ribosomal maturation protein DarP (177 aa).

The segment at 1–26 is disordered; sequence MKIVGDSEHFKQPYDSDEEYVSKTED.

Belongs to the DarP family.

The protein localises to the cytoplasm. Member of a network of 50S ribosomal subunit biogenesis factors which assembles along the 30S-50S interface, preventing incorrect 23S rRNA structures from forming. Promotes peptidyl transferase center (PTC) maturation. This Shewanella sp. (strain ANA-3) protein is Dual-action ribosomal maturation protein DarP.